The sequence spans 309 residues: tRNA dimethylallyltransferase (309 aa).

10–17 (GPTASGKT) lines the ATP pocket. Residue 12–17 (TASGKT) coordinates substrate. Interaction with substrate tRNA regions lie at residues 35–38 (DSAL) and 240–245 (RCVGYR).

The protein belongs to the IPP transferase family. Monomer. It depends on Mg(2+) as a cofactor.

It carries out the reaction adenosine(37) in tRNA + dimethylallyl diphosphate = N(6)-dimethylallyladenosine(37) in tRNA + diphosphate. Catalyzes the transfer of a dimethylallyl group onto the adenine at position 37 in tRNAs that read codons beginning with uridine, leading to the formation of N6-(dimethylallyl)adenosine (i(6)A). The polypeptide is tRNA dimethylallyltransferase (Baumannia cicadellinicola subsp. Homalodisca coagulata).